A 315-amino-acid chain; its full sequence is Probable inactive acetaldehyde dehydrogenase 1 (315 aa).

NAD(+) is bound by residues 14–17 (SGDV) and Asn-288.

It belongs to the acetaldehyde dehydrogenase family.

In Mycolicibacterium vanbaalenii (strain DSM 7251 / JCM 13017 / BCRC 16820 / KCTC 9966 / NRRL B-24157 / PYR-1) (Mycobacterium vanbaalenii), this protein is Probable inactive acetaldehyde dehydrogenase 1.